A 513-amino-acid polypeptide reads, in one-letter code: Bifunctional purine biosynthesis protein PurH (513 aa).

The region spanning 1-146 (MPRFALLSVS…KNHAHLTILT (146 aa)) is the MGS-like domain.

This sequence belongs to the PurH family.

The catalysed reaction is (6R)-10-formyltetrahydrofolate + 5-amino-1-(5-phospho-beta-D-ribosyl)imidazole-4-carboxamide = 5-formamido-1-(5-phospho-D-ribosyl)imidazole-4-carboxamide + (6S)-5,6,7,8-tetrahydrofolate. It catalyses the reaction IMP + H2O = 5-formamido-1-(5-phospho-D-ribosyl)imidazole-4-carboxamide. Its pathway is purine metabolism; IMP biosynthesis via de novo pathway; 5-formamido-1-(5-phospho-D-ribosyl)imidazole-4-carboxamide from 5-amino-1-(5-phospho-D-ribosyl)imidazole-4-carboxamide (10-formyl THF route): step 1/1. It participates in purine metabolism; IMP biosynthesis via de novo pathway; IMP from 5-formamido-1-(5-phospho-D-ribosyl)imidazole-4-carboxamide: step 1/1. This chain is Bifunctional purine biosynthesis protein PurH, found in Synechococcus elongatus (strain ATCC 33912 / PCC 7942 / FACHB-805) (Anacystis nidulans R2).